The chain runs to 70 residues: DNA gyrase inhibitor YacG (70 aa).

Basic and acidic residues predominate over residues 1-15 (MPEDKKAAAKVEPLR). The disordered stretch occupies residues 1–22 (MPEDKKAAAKVEPLRKTRPCPE). Zn(2+) is bound by residues Cys-20, Cys-23, Cys-35, and Cys-39.

This sequence belongs to the DNA gyrase inhibitor YacG family. As to quaternary structure, interacts with GyrB. Zn(2+) is required as a cofactor.

Inhibits all the catalytic activities of DNA gyrase by preventing its interaction with DNA. Acts by binding directly to the C-terminal domain of GyrB, which probably disrupts DNA binding by the gyrase. The chain is DNA gyrase inhibitor YacG from Rhizobium johnstonii (strain DSM 114642 / LMG 32736 / 3841) (Rhizobium leguminosarum bv. viciae).